Reading from the N-terminus, the 249-residue chain is Probable transcriptional regulatory protein Psyc_0938 (249 aa).

This sequence belongs to the TACO1 family.

The protein resides in the cytoplasm. The chain is Probable transcriptional regulatory protein Psyc_0938 from Psychrobacter arcticus (strain DSM 17307 / VKM B-2377 / 273-4).